Consider the following 253-residue polypeptide: 3-deoxy-manno-octulosonate cytidylyltransferase (253 aa).

It belongs to the KdsB family.

The protein localises to the cytoplasm. It carries out the reaction 3-deoxy-alpha-D-manno-oct-2-ulosonate + CTP = CMP-3-deoxy-beta-D-manno-octulosonate + diphosphate. It functions in the pathway nucleotide-sugar biosynthesis; CMP-3-deoxy-D-manno-octulosonate biosynthesis; CMP-3-deoxy-D-manno-octulosonate from 3-deoxy-D-manno-octulosonate and CTP: step 1/1. It participates in bacterial outer membrane biogenesis; lipopolysaccharide biosynthesis. Activates KDO (a required 8-carbon sugar) for incorporation into bacterial lipopolysaccharide in Gram-negative bacteria. The chain is 3-deoxy-manno-octulosonate cytidylyltransferase from Pseudoalteromonas translucida (strain TAC 125).